A 1403-amino-acid polypeptide reads, in one-letter code: Centrosomal protein of 162 kDa (1403 aa).

Positions 20–46 (LSDDSFENSNKTPRQPNEDNKEMKKKD) are disordered. Residues 35–46 (PNEDNKEMKKKD) are compositionally biased toward basic and acidic residues. Phosphoserine occurs at positions 160 and 163. Disordered regions lie at residues 169–243 (LHRY…MLAN), 256–292 (VGLSSQEKATPKAKAPPEITDDGPAETGVPYGQSSGD), 306–348 (SLGD…ESDL), and 453–606 (NPSL…GGNR). Acidic residues predominate over residues 178–208 (PAEDGCENESEQEELPETYSDDFEDAEDADD). A compositionally biased stretch (basic and acidic residues) spans 210–238 (LITKDEETHPKENSESGKDSFPKQEEEKT). The segment covering 485–500 (PCKKARSTPSLPKRKP) has biased composition (basic residues). 2 stretches are compositionally biased toward basic and acidic residues: residues 526–536 (LEKKTSKDNTK) and 571–585 (PHREGSPATPKRPED). Positions 614–1124 (KRAQDAEEKW…QKERRMMLSR (511 aa)) form a coiled coil. The segment at 1126 to 1147 (IPRSREETAAKRLKKDPNRGHG) is disordered. Over residues 1128-1144 (RSREETAAKRLKKDPNR) the composition is skewed to basic and acidic residues. Residues 1174 to 1386 (EENYRLRSEL…LDVLRELHRQ (213 aa)) are a coiled coil.

This sequence belongs to the CEP162 family. Interacts with CPNE4. Interacts with alpha-tubulin. Interacts with CEP290.

It is found in the cytoplasm. The protein localises to the cytoskeleton. Its subcellular location is the microtubule organizing center. It localises to the centrosome. The protein resides in the centriole. It is found in the spindle. The protein localises to the nucleus. Required to promote assembly of the transition zone in primary cilia. Acts by specifically recognizing and binding the axonemal microtubule. Localizes to the distal ends of centrioles before ciliogenesis and directly binds to axonemal microtubule, thereby promoting and restricting transition zone formation specifically at the cilia base. Required to mediate CEP290 association with microtubules. In Mus musculus (Mouse), this protein is Centrosomal protein of 162 kDa (Cep162).